We begin with the raw amino-acid sequence, 339 residues long: Major pollen allergen Lol p 5b (339 aa).

The N-terminal stretch at 1 to 25 (MAVQKHTVALFLAVALVAGPAASYA) is a signal peptide. 9 repeat units span residues 32 to 34 (PAT), 35 to 37 (PAT), 38 to 40 (PAA), 41 to 43 (PAT), 44 to 46 (AAT), 47 to 49 (PAT), 50 to 52 (PAT), 53 to 55 (PAT), and 56 to 58 (PAA). A 9 X 3 AA tandem repeats of [PA]-A-[TA] region spans residues 32-58 (PATPATPAAPATAATPATPATPATPAA). Residues 36 to 58 (ATPAAPATAATPATPATPATPAA) show a composition bias toward low complexity. The disordered stretch occupies residues 36–65 (ATPAAPATAATPATPATPATPAAVPSGKAT). One copy of the 2-1; truncated repeat lies at 285–290 (ATPAAA). The 6 X 9 AA approximate tandem repeats of T-A-T-A-T-P-A-A-A stretch occupies residues 285–334 (ATPAAAATATPTPAAATATATPAAAYATATPAAATATATPAAATATPAAA). Tandem repeats lie at residues 292 to 300 (TATPTPAAA), 301 to 309 (TATATPAAA), 310 to 318 (YATATPAAA), and 319 to 327 (TATATPAAA). One copy of the 2-6; truncated repeat lies at 328-334 (TATPAAA).

It belongs to the Poa p IX/Phl p VI allergen family. Pollen, starch granules.

This Lolium perenne (Perennial ryegrass) protein is Major pollen allergen Lol p 5b.